The sequence spans 1883 residues: Endoribonuclease Dicer homolog 1 (1883 aa).

Disordered stretches follow at residues 71 to 97 (AESS…PELP), 129 to 188 (ARKE…DDRR), and 221 to 262 (RSGT…EKPV). A compositionally biased stretch (pro residues) spans 75-96 (PAPPPPPPPPLPEPVPVAPPEL). Composition is skewed to basic and acidic residues over residues 129-138 (ARKEPRRESH) and 228-262 (ESDR…EKPV). Residues 274–413 (VLEQAKSRNT…QEDCAIKIRN (140 aa)) form the Helicase ATP-binding domain. 287–294 (LETGAGKT) provides a ligand contact to ATP. A DECH box motif is present at residues 358 to 361 (DECH). The segment at 577–604 (KSETSDVEMQNTEKHNTNDLEEGELPDS) is disordered. One can recognise a Helicase C-terminal domain in the interval 629–789 (LIKILLKYQH…RTDLSHLDGT (161 aa)). The region spanning 817–912 (AVGLIHFYCS…LPDRGSGEGE (96 aa)) is the Dicer dsRNA-binding fold domain. A disordered region spans residues 901-928 (TLLPDRGSGEGEKTEQNDEGEPLPGTAR). Residues 907 to 916 (GSGEGEKTEQ) are compositionally biased toward basic and acidic residues. A PAZ domain is found at 1163-1296 (HFSDYQNQGK…LPPELCLVHP (134 aa)). 2 RNase III domains span residues 1320-1498 (LAVQ…VAGG) and 1538-1686 (FDTL…LDSG). Residues Glu1576, Asp1672, and Glu1675 each contribute to the Mg(2+) site. DRBM domains are found at residues 1712 to 1775 (HPVR…VLKE) and 1797 to 1872 (FTRQ…LLNR).

It belongs to the helicase family. Dicer subfamily. May interact with ARGONAUTE1 or PINHEAD through their common PAZ domains. Mg(2+) serves as cofactor. The cofactor is Mn(2+).

It localises to the nucleus. Involved in the RNA silencing pathway. Cleaves double-stranded RNA to produce microRNAs (miRNAs) of 21-24 nucleotides which target the selective destruction of complementary RNAs. Regulates by this way the development of the plant. May not be involved in small interfering RNAs (siRNAs) production. This is Endoribonuclease Dicer homolog 1 (DCL1) from Oryza sativa subsp. japonica (Rice).